The sequence spans 352 residues: AP2/ERF and B3 domain-containing transcription factor At1g51120 (352 aa).

Residues 1 to 20 (MDEMSNVAKTTTETSGLTDS) are disordered. A compositionally biased stretch (polar residues) spans 7-20 (VAKTTTETSGLTDS). A DNA-binding region (AP2/ERF) is located at residues 46 to 103 (KFKGVVQQQNGHWGAQIYADHRRIWLGTFKSAHEAAAAYDSASIKLRSFDANSHRNFP). Residues 178 to 297 (FQKELTPSDV…KTFLMIDVHH (120 aa)) constitute a DNA-binding region (TF-B3).

The protein belongs to the AP2/ERF transcription factor family. RAV subfamily.

It is found in the nucleus. Its function is as follows. Probably acts as a transcriptional activator. Binds to the GCC-box pathogenesis-related promoter element. May be involved in the regulation of gene expression by stress factors and by components of stress signal transduction pathways. The sequence is that of AP2/ERF and B3 domain-containing transcription factor At1g51120 from Arabidopsis thaliana (Mouse-ear cress).